The chain runs to 334 residues: Dual specificity mitogen-activated protein kinase kinase 6 (334 aa).

Over residues 1 to 11 (MSQSKGKKRNP) the composition is skewed to basic residues. A disordered region spans residues 1–34 (MSQSKGKKRNPGLKIPKEAFEQPQTSSTPPRDLD). The interval 4-19 (SKGKKRNPGLKIPKEA) is d domain. Residues 53 to 314 (LEPIVELGRG…YPELMQHPFF (262 aa)) form the Protein kinase domain. Residues 59–67 (LGRGAYGVV) and Lys82 contribute to the ATP site. Catalysis depends on Asp179, which acts as the Proton acceptor. A Phosphoserine; by MAPK3 modification is found at Ser207. At Thr211 the chain carries Phosphothreonine; by MAPK3. The tract at residues 311–334 (HPFFTVHESKAADVASFVKLILGD) is DVD domain.

This sequence belongs to the protein kinase superfamily. STE Ser/Thr protein kinase family. MAP kinase kinase subfamily. As to quaternary structure, dimer. Interacts (via its D domain) with its substrates MAPK11, MAPK12, MAPK13 and MAPK14. Interacts (via its DVD domain) with MAP3Ks activators like MAP3K5/ASK1, MAP3K1/MEKK1, MAP3K2/MEKK2, MAP3K3/MEKK3, MAP3K4/MEKK4, MAP3K7/TAK1, MAP3K11/MLK3 and MAP3K17/TAOK2. Interacts with DCTN1. Interacts with EIF2AK2/PKR. Weakly autophosphorylated. Phosphorylated at Ser-207 and Thr-211 by the majority of M3Ks, such as MAP3K5/ASK1, MAP3K1/MEKK1, MAP3K2/MEKK2, MAP3K3/MEKK3, MAP3K4/MEKK4, MAP3K7/TAK1, MAP3K11/MLK3 and MAP3K17/TAOK2. Post-translationally, in response to genotoxic stress, MAP3K-phosphorylated MAP2K6 is ubiquitinated and degraded by the SCF(FBXO31) complex.

The protein localises to the nucleus. It is found in the cytoplasm. It localises to the cytoskeleton. It carries out the reaction L-seryl-[protein] + ATP = O-phospho-L-seryl-[protein] + ADP + H(+). The enzyme catalyses L-threonyl-[protein] + ATP = O-phospho-L-threonyl-[protein] + ADP + H(+). It catalyses the reaction L-tyrosyl-[protein] + ATP = O-phospho-L-tyrosyl-[protein] + ADP + H(+). Activated by dual phosphorylation on Ser-207 and Thr-211 in response to a variety of cellular stresses, including UV radiation, osmotic shock, hypoxia, inflammatory cytokines, interferon gamma (IFNG), and less often by growth factors. MAP2K6/MKK6 is activated by the majority of M3Ks, such as MAP3K5/ASK1, MAP3K1/MEKK1, MAP3K2/MEKK2, MAP3K3/MEKK3, MAP3K4/MEKK4, MAP3K7/TAK1, MAP3K11/MLK3 and MAP3K17/TAOK2. Functionally, dual specificity protein kinase which acts as an essential component of the MAP kinase signal transduction pathway. With MAP3K3/MKK3, catalyzes the concomitant phosphorylation of a threonine and a tyrosine residue in the MAP kinases p38 MAPK11, MAPK12, MAPK13 and MAPK14 and plays an important role in the regulation of cellular responses to cytokines and all kinds of stresses. Especially, MAP2K3/MKK3 and MAP2K6/MKK6 are both essential for the activation of MAPK11 and MAPK13 induced by environmental stress, whereas MAP2K6/MKK6 is the major MAPK11 activator in response to TNF. MAP2K6/MKK6 also phosphorylates and activates PAK6. The p38 MAP kinase signal transduction pathway leads to direct activation of transcription factors. Nuclear targets of p38 MAP kinase include the transcription factors ATF2 and ELK1. Within the p38 MAPK signal transduction pathway, MAP3K6/MKK6 mediates phosphorylation of STAT4 through MAPK14 activation, and is therefore required for STAT4 activation and STAT4-regulated gene expression in response to IL-12 stimulation. The pathway is also crucial for IL-6-induced SOCS3 expression and down-regulation of IL-6-mediated gene induction; and for IFNG-dependent gene transcription. Has a role in osteoclast differentiation through NF-kappa-B transactivation by TNFSF11, and in endochondral ossification and since SOX9 is another likely downstream target of the p38 MAPK pathway. MAP2K6/MKK6 mediates apoptotic cell death in thymocytes. Acts also as a regulator for melanocytes dendricity, through the modulation of Rho family GTPases. The sequence is that of Dual specificity mitogen-activated protein kinase kinase 6 (Map2k6) from Mus musculus (Mouse).